The following is a 257-amino-acid chain: Global transcriptional regulator CodY (257 aa).

Positions 1–155 (MSLLSKTREL…AATVIGMEIL (155 aa)) are GAF domain. Positions 203–222 (ASKVADRVGITRSVIVNALR) form a DNA-binding region, H-T-H motif.

This sequence belongs to the CodY family.

The protein resides in the cytoplasm. Its function is as follows. DNA-binding global transcriptional regulator which is involved in the adaptive response to starvation and acts by directly or indirectly controlling the expression of numerous genes in response to nutrient availability. During rapid exponential growth, CodY is highly active and represses genes whose products allow adaptation to nutrient depletion. The protein is Global transcriptional regulator CodY of Staphylococcus epidermidis (strain ATCC 12228 / FDA PCI 1200).